The chain runs to 229 residues: Homeobox-leucine zipper protein HOX3 (229 aa).

Positions 1–82 (MMGATSPSGL…GPHRPKKLRL (82 aa)) are disordered. Residues 52–68 (GEEEEFPMGSVEEDEEE) show a composition bias toward acidic residues. Residues 75 to 134 (HRPKKLRLSKEQSRLLEESFRLNHTLTPKQKEALAIKLKLRPRQVEVWFQNRRARTKLKQ) constitute a DNA-binding region (homeobox). The segment at 133–177 (KQTEMECEYLKRCFGSLTEENRRLQREVEELRAMRVAPPTVLSPH) is leucine-zipper. The tract at residues 198–229 (AATGPPAVRPPPSSAAAAAPSPFHPRRPSAAF) is disordered.

This sequence belongs to the HD-ZIP homeobox family. Class II subfamily. In terms of assembly, homodimer. May form a heterodimer with HOX1, HOX2 or HOX7. In terms of tissue distribution, expressed in seedlings, roots, leaves, nodes, internodes, flowers and embryo.

The protein resides in the nucleus. Probable transcription repressor that binds to the DNA sequence 5'-CAAT[GC]ATTG-3'. This chain is Homeobox-leucine zipper protein HOX3 (HOX3), found in Oryza sativa subsp. indica (Rice).